The following is a 328-amino-acid chain: Tryptophan--tRNA ligase (328 aa).

Residues 10 to 12 (QAT) and 18 to 19 (GN) each bind ATP. The 'HIGH' region signature appears at 11–19 (ATGSLHLGN). Position 134 (Asp134) interacts with L-tryptophan. ATP contacts are provided by residues 146-148 (GED), Ile186, and 195-199 (KMSKS). The 'KMSKS' region motif lies at 195-199 (KMSKS).

The protein belongs to the class-I aminoacyl-tRNA synthetase family. In terms of assembly, homodimer.

It localises to the cytoplasm. The catalysed reaction is tRNA(Trp) + L-tryptophan + ATP = L-tryptophyl-tRNA(Trp) + AMP + diphosphate + H(+). Catalyzes the attachment of tryptophan to tRNA(Trp). This is Tryptophan--tRNA ligase from Rickettsia bellii (strain RML369-C).